Consider the following 756-residue polypeptide: Ent-kaur-16-ene synthase, chloroplastic (756 aa).

4 residues coordinate Mg(2+): Asp496, Asp500, Asn639, and Glu647. The DDXXD motif signature appears at 496–500; sequence DDFFD.

This sequence belongs to the terpene synthase family. It depends on Mg(2+) as a cofactor. Highly expressed in panicles and at lower levels in leaves and stems.

The protein localises to the plastid. The protein resides in the chloroplast. It catalyses the reaction ent-copalyl diphosphate = ent-kaur-16-ene + diphosphate. The protein operates within plant hormone biosynthesis; gibberellin biosynthesis. Functionally, catalyzes the conversion of ent-copalyl diphosphate to the gibberellin precursor ent-kaur-16-ene. The protein is Ent-kaur-16-ene synthase, chloroplastic (KS1) of Oryza sativa subsp. japonica (Rice).